A 188-amino-acid polypeptide reads, in one-letter code: Elongation factor P-like protein (188 aa).

It belongs to the elongation factor P family.

The protein is Elongation factor P-like protein of Vibrio cholerae serotype O1 (strain ATCC 39541 / Classical Ogawa 395 / O395).